We begin with the raw amino-acid sequence, 144 residues long: MQLLVLQGPNLNMLGQREPTIYGSTSLADIHNAMREKATSAGIELSFIQSNHEGVLVDTLHAHYGKIQGIIINPGALTHYGLSLRDGLALMDVPIIEVHLSNVYAREAFRHHSVVAAIAQGQISGLGWQGYLYALDWFIQRKSA.

Y22 (proton acceptor) is an active-site residue. Substrate is bound by residues N73, H79, and D86. Catalysis depends on H99, which acts as the Proton donor. Substrate-binding positions include 100 to 101 (LS) and R110.

This sequence belongs to the type-II 3-dehydroquinase family. In terms of assembly, homododecamer.

It catalyses the reaction 3-dehydroquinate = 3-dehydroshikimate + H2O. Its pathway is metabolic intermediate biosynthesis; chorismate biosynthesis; chorismate from D-erythrose 4-phosphate and phosphoenolpyruvate: step 3/7. Functionally, catalyzes a trans-dehydration via an enolate intermediate. This Herpetosiphon aurantiacus (strain ATCC 23779 / DSM 785 / 114-95) protein is 3-dehydroquinate dehydratase.